Here is a 273-residue protein sequence, read N- to C-terminus: Shikimate dehydrogenase (NADP(+)) (273 aa).

Shikimate is bound by residues 15–17 (SQS) and T62. K66 (proton acceptor) is an active-site residue. An NADP(+)-binding site is contributed by E78. 2 residues coordinate shikimate: N87 and D102. Residues 127-131 (GAGGA), 151-156 (NRTVIK), and M215 contribute to the NADP(+) site. Position 217 (Y217) interacts with shikimate. NADP(+) is bound at residue G239.

This sequence belongs to the shikimate dehydrogenase family. Homodimer.

The enzyme catalyses shikimate + NADP(+) = 3-dehydroshikimate + NADPH + H(+). Its pathway is metabolic intermediate biosynthesis; chorismate biosynthesis; chorismate from D-erythrose 4-phosphate and phosphoenolpyruvate: step 4/7. Involved in the biosynthesis of the chorismate, which leads to the biosynthesis of aromatic amino acids. Catalyzes the reversible NADPH linked reduction of 3-dehydroshikimate (DHSA) to yield shikimate (SA). In Chromobacterium violaceum (strain ATCC 12472 / DSM 30191 / JCM 1249 / CCUG 213 / NBRC 12614 / NCIMB 9131 / NCTC 9757 / MK), this protein is Shikimate dehydrogenase (NADP(+)).